The primary structure comprises 626 residues: UvrABC system protein C (626 aa).

The 78-residue stretch at 20–97 folds into the GIY-YIG domain; sequence ECSGVYKMLD…IKKFQPKFNI (78 aa). Residues 207-242 form the UVR domain; that stretch reads IALQANLSKKMQELSSQMRFEEAAEIRDRIKALSYV.

It belongs to the UvrC family. Interacts with UvrB in an incision complex.

The protein localises to the cytoplasm. Its function is as follows. The UvrABC repair system catalyzes the recognition and processing of DNA lesions. UvrC both incises the 5' and 3' sides of the lesion. The N-terminal half is responsible for the 3' incision and the C-terminal half is responsible for the 5' incision. This Rickettsia prowazekii (strain Madrid E) protein is UvrABC system protein C.